A 763-amino-acid chain; its full sequence is Phosphoglycerol transferase I (763 aa).

A run of 4 helical transmembrane segments spans residues 1–21 (MSELLSVALFLASVLVYAWKA), 24–44 (NTWWFAATLTVLGLFVILNIT), 77–97 (ILPGIGIVLALVGVFGALGWI), and 108–128 (VGYSLLALLLALGSVDASPAF).

Belongs to the OpgB family.

The protein localises to the cell inner membrane. The enzyme catalyses a phosphatidylglycerol + a membrane-derived-oligosaccharide D-glucose = a 1,2-diacyl-sn-glycerol + a membrane-derived-oligosaccharide 6-(glycerophospho)-D-glucose.. Its pathway is glycan metabolism; osmoregulated periplasmic glucan (OPG) biosynthesis. Functionally, transfers a phosphoglycerol residue from phosphatidylglycerol to the membrane-bound nascent glucan backbones. The polypeptide is Phosphoglycerol transferase I (Salmonella arizonae (strain ATCC BAA-731 / CDC346-86 / RSK2980)).